Reading from the N-terminus, the 1374-residue chain is MAQQTFTGRKRVRKFFGHIREVAEMPNLIEVQKASYDQFLMVAEPPGGRPDEGLQAVFRSVFPISDFSNASMLEFVRYEFEPPKYDVDECRQRGMTYAAPLKVTLRLIVFDIDEETGARSVKDIKEQDVYMGDIPLMTMNGTFIVNGTERVIVSQMHRSPGVFFDHDKGKTHSSGKLLFAARIIPYRGSWLDIEFDAKDIVYARIDRRRKLPVTSLMFALGLDGEEILSTFYNKILYKRTKEGWRVPFDVNRFRGYSTVNDLIDADTGKVVLEAGKKLTVRAARQLQEKGLKALRMSDEELVGNYLAEDLVNPKTGEIYAEAGEEITDKTLKMLNEQGYKELPLLDIDHVNVGPYIRNTLNADKNMTREDALFDIYRVMRPGEPPTLDSAQNMFQSLFFDAERYDLSAVGRVKMNMRLDLDAPDTHRTLRKEDILAVIKTLVGLRDGKGEIDDIDHLGNRRVRSVGELMENQYRIGLLRMERAIKERMSSVDIDTVMPQDLINAKPAAAAVREFFGSSQLSQFMDQTNPLSEITHKRRLSALGPGGLTRERAGFEVRDVHPTHYGRICPIETPEGPNIGLINSLATFARVNKYGFVETPYRKVKEGRVTDEVVYLSAMEEGRYAVAQANVSLDAKGKFTDDLVVCRAGGTRDVVPMPADQVDYMDVSPKQLVSVAAALIPFLENDDANRALMGSNMQRQAVPLVRAEAPFVGTGMEGVVARDSGAAIAARRTGIIDQIDATRIVIRATEDLDPTKSGVDIYRLMKYQRSNQSTCINQRPLVKVGDHVKKGDIIADGPSTDLGELALGRNVLVAFMPWNGYNFEDSILLSERIVKEDVFTSIHIEEFEVMARDTKLGPEEITRDIPNVSEEALKNLDEAGIVYIGAEVRAGDILVGKITPKGESPMTPEEKLLRAIFGEKASDVRDTSLRVPPGVQGTIVEVRVFNRHGVDKDERALAIEREEIERLAKDRDDEQAILDRNVYGRLADLLDGRQGIAGPKGFKKDTKITRAVLEEYPKSQWWLFAAPNDKLMAEIEAMRKQYDESKKGLEQRFLDKVEKLQRGDELPPGVMKMVKVFVAVKRKIQPGDKMAGRHGNKGVVSKIVPIEDMPFLEDGTHADIVLNPLGVPSRMNVGQILETHLGWACAGLGKRIGETIDAYYQSQDLKPLRETLRKIYGEDETIKSLDDGELLELGRNLSHGVPIATPVFDGAKEADIEEMLKLAGFDASGQSTVYDGRTGDQFDRRVTVGYIYMLKLHHLVDDKIHARSIGPYSLVTQQPLGGKAQFGGQRFGEMEVWALEAYGAAYTLQEMLTVKSDDVAGRTKVYEAIVRGDDTFEAGIPESFNVLVKEMRSLGLNVDLHNSKLAAPPPAEAAE.

It belongs to the RNA polymerase beta chain family. The RNAP catalytic core consists of 2 alpha, 1 beta, 1 beta' and 1 omega subunit. When a sigma factor is associated with the core the holoenzyme is formed, which can initiate transcription.

The enzyme catalyses RNA(n) + a ribonucleoside 5'-triphosphate = RNA(n+1) + diphosphate. DNA-dependent RNA polymerase catalyzes the transcription of DNA into RNA using the four ribonucleoside triphosphates as substrates. The chain is DNA-directed RNA polymerase subunit beta from Rhodopseudomonas palustris (strain TIE-1).